Reading from the N-terminus, the 429-residue chain is 3-phosphoshikimate 1-carboxyvinyltransferase (429 aa).

3-phosphoshikimate is bound by residues lysine 21, serine 22, and arginine 26. Lysine 21 lines the phosphoenolpyruvate pocket. Glycine 94 and arginine 122 together coordinate phosphoenolpyruvate. 4 residues coordinate 3-phosphoshikimate: serine 167, glutamine 169, aspartate 315, and lysine 342. Glutamine 169 is a phosphoenolpyruvate binding site. Aspartate 315 serves as the catalytic Proton acceptor. Phosphoenolpyruvate-binding residues include arginine 346 and arginine 388.

This sequence belongs to the EPSP synthase family. Monomer.

It localises to the cytoplasm. It carries out the reaction 3-phosphoshikimate + phosphoenolpyruvate = 5-O-(1-carboxyvinyl)-3-phosphoshikimate + phosphate. It functions in the pathway metabolic intermediate biosynthesis; chorismate biosynthesis; chorismate from D-erythrose 4-phosphate and phosphoenolpyruvate: step 6/7. Catalyzes the transfer of the enolpyruvyl moiety of phosphoenolpyruvate (PEP) to the 5-hydroxyl of shikimate-3-phosphate (S3P) to produce enolpyruvyl shikimate-3-phosphate and inorganic phosphate. This chain is 3-phosphoshikimate 1-carboxyvinyltransferase, found in Desulforudis audaxviator (strain MP104C).